Consider the following 94-residue polypeptide: Small ribosomal subunit protein bS6 (94 aa).

It belongs to the bacterial ribosomal protein bS6 family.

Its function is as follows. Binds together with bS18 to 16S ribosomal RNA. The chain is Small ribosomal subunit protein bS6 from Clostridium botulinum (strain Kyoto / Type A2).